A 161-amino-acid polypeptide reads, in one-letter code: Glycine cleavage system H protein 3 (161 aa).

The Lipoyl-binding domain occupies 40-122; the sequence is TVTLGLTDVG…YGDAWIVKIK (83 aa). At Lys-81 the chain carries N6-lipoyllysine.

This sequence belongs to the GcvH family. As to quaternary structure, the glycine cleavage system is composed of four proteins: P, T, L and H. It depends on (R)-lipoate as a cofactor.

The glycine cleavage system catalyzes the degradation of glycine. The H protein shuttles the methylamine group of glycine from the P protein to the T protein. This chain is Glycine cleavage system H protein 3, found in Aquifex aeolicus (strain VF5).